The sequence spans 313 residues: Glutaminase (313 aa).

7 residues coordinate substrate: serine 64, asparagine 116, glutamate 163, asparagine 170, tyrosine 194, tyrosine 246, and valine 264.

This sequence belongs to the glutaminase family. Homotetramer.

It carries out the reaction L-glutamine + H2O = L-glutamate + NH4(+). In Exiguobacterium sp. (strain ATCC BAA-1283 / AT1b), this protein is Glutaminase.